A 550-amino-acid polypeptide reads, in one-letter code: Chaperonin GroEL 2 (550 aa).

ATP-binding positions include 30–33 (TLGP), Lys-51, 87–91 (DGTTT), Gly-415, 480–482 (NAA), and Asp-496.

The protein belongs to the chaperonin (HSP60) family. As to quaternary structure, forms a cylinder of 14 subunits composed of two heptameric rings stacked back-to-back. Interacts with the co-chaperonin GroES.

The protein resides in the cytoplasm. The enzyme catalyses ATP + H2O + a folded polypeptide = ADP + phosphate + an unfolded polypeptide.. In terms of biological role, together with its co-chaperonin GroES, plays an essential role in assisting protein folding. The GroEL-GroES system forms a nano-cage that allows encapsulation of the non-native substrate proteins and provides a physical environment optimized to promote and accelerate protein folding. The sequence is that of Chaperonin GroEL 2 from Erythrobacter litoralis (strain HTCC2594).